A 237-amino-acid chain; its full sequence is Phosphatidylserine decarboxylase proenzyme (237 aa).

The Schiff-base intermediate with substrate; via pyruvic acid role is filled by serine 206. Residue serine 206 is modified to Pyruvic acid (Ser); by autocatalysis.

Belongs to the phosphatidylserine decarboxylase family. PSD-A subfamily. In terms of assembly, heterodimer of a large membrane-associated beta subunit and a small pyruvoyl-containing alpha subunit. Requires pyruvate as cofactor. In terms of processing, is synthesized initially as an inactive proenzyme. Formation of the active enzyme involves a self-maturation process in which the active site pyruvoyl group is generated from an internal serine residue via an autocatalytic post-translational modification. Two non-identical subunits are generated from the proenzyme in this reaction, and the pyruvate is formed at the N-terminus of the alpha chain, which is derived from the carboxyl end of the proenzyme. The post-translation cleavage follows an unusual pathway, termed non-hydrolytic serinolysis, in which the side chain hydroxyl group of the serine supplies its oxygen atom to form the C-terminus of the beta chain, while the remainder of the serine residue undergoes an oxidative deamination to produce ammonia and the pyruvoyl prosthetic group on the alpha chain.

It is found in the cell membrane. It catalyses the reaction a 1,2-diacyl-sn-glycero-3-phospho-L-serine + H(+) = a 1,2-diacyl-sn-glycero-3-phosphoethanolamine + CO2. It functions in the pathway phospholipid metabolism; phosphatidylethanolamine biosynthesis; phosphatidylethanolamine from CDP-diacylglycerol: step 2/2. Functionally, catalyzes the formation of phosphatidylethanolamine (PtdEtn) from phosphatidylserine (PtdSer). The chain is Phosphatidylserine decarboxylase proenzyme from Rhodococcus opacus (strain B4).